We begin with the raw amino-acid sequence, 536 residues long: Lysosomal acid glucosylceramidase (536 aa).

The first 39 residues, 1-39, serve as a signal peptide directing secretion; the sequence is MELSSPSREECPRPQGRVGIMAASLMGLLLLQAASWASG. Cystine bridges form between cysteine 43-cysteine 55 and cysteine 57-cysteine 62. Residues asparagine 58, asparagine 98, and asparagine 185 are each glycosylated (N-linked (GlcNAc...) asparagine). The active-site Proton donor is the glutamate 274. An N-linked (GlcNAc...) asparagine glycan is attached at asparagine 309. Catalysis depends on glutamate 379, which acts as the Nucleophile. A glycan (N-linked (GlcNAc...) asparagine) is linked at asparagine 501.

It belongs to the glycosyl hydrolase 30 family. As to quaternary structure, interacts with saposin-C. Interacts with SCARB2. Interacts with TCP1. Interacts with GRN; this interaction prevents aggregation of GBA1-SCARB2 complex via interaction with HSPA1A upon stress.

The protein localises to the lysosome membrane. It catalyses the reaction a beta-D-glucosyl-(1&lt;-&gt;1')-N-acylsphing-4-enine + H2O = an N-acylsphing-4-enine + D-glucose. The catalysed reaction is a beta-D-galactosyl-(1&lt;-&gt;1')-N-acylsphing-4-enine + H2O = an N-acylsphing-4-enine + D-galactose. It carries out the reaction cholesteryl 3-beta-D-glucoside + H2O = cholesterol + D-glucose. The enzyme catalyses a beta-D-glucosyl-(1&lt;-&gt;1')-N-acylsphing-4-enine + cholesterol = cholesteryl 3-beta-D-glucoside + an N-acylsphing-4-enine. It catalyses the reaction beta-D-glucosyl-N-(9Z-octadecenoyl)-sphing-4E-enine + cholesterol = N-(9Z-octadecenoyl)-sphing-4-enine + cholesteryl 3-beta-D-glucoside. The catalysed reaction is beta-D-glucosyl-N-octanoylsphing-4E-enine + cholesterol = N-octanoylsphing-4-enine + cholesteryl 3-beta-D-glucoside. It carries out the reaction beta-D-glucosyl-N-dodecanoylsphing-4-enine + cholesterol = N-dodecanoylsphing-4-enine + cholesteryl 3-beta-D-glucoside. The enzyme catalyses beta-D-glucosyl-(1&lt;-&gt;1)-N-octadecanoylsphing-4-enine + cholesterol = N-octadecanoylsphing-4-enine + cholesteryl 3-beta-D-glucoside. It catalyses the reaction beta-D-glucosyl-(1&lt;-&gt;1')-N-(15Z-tetracosenoyl)-sphing-4-enine + cholesterol = N-(15Z-tetracosenoyl)-sphing-4-enine + cholesteryl 3-beta-D-glucoside. The catalysed reaction is a beta-D-galactosyl-(1&lt;-&gt;1')-N-acylsphing-4-enine + cholesterol = cholesteryl 3-beta-D-galactoside + an N-acylsphing-4-enine. It carries out the reaction 1-(beta-D-galactosyl)-N-dodecanoylsphing-4-enine + cholesterol = cholesteryl 3-beta-D-galactoside + N-dodecanoylsphing-4-enine. The enzyme catalyses a beta-D-xylosyl-(1&lt;-&gt;1')-N-acylsphing-4-enine + cholesterol = cholesteryl 3-beta-D-xyloside + an N-acylsphing-4-enine. It catalyses the reaction beta-D-xylosyl-(1&lt;-&gt;1')-N-(9Z-octadecenoyl)-sphing-4-enine + cholesterol = cholesteryl 3-beta-D-xyloside + N-(9Z-octadecenoyl)-sphing-4-enine. Its pathway is steroid metabolism; cholesterol metabolism. The protein operates within sphingolipid metabolism. In terms of biological role, glucosylceramidase that catalyzes, within the lysosomal compartment, the hydrolysis of glucosylceramides/GlcCers (such as beta-D-glucosyl-(1&lt;-&gt;1')-N-acylsphing-4-enine) into free ceramides (such as N-acylsphing-4-enine) and glucose. Plays a central role in the degradation of complex lipids and the turnover of cellular membranes. Through the production of ceramides, participates in the PKC-activated salvage pathway of ceramide formation. Catalyzes the glucosylation of cholesterol, through a transglucosylation reaction where glucose is transferred from GlcCer to cholesterol. GlcCer containing mono-unsaturated fatty acids (such as beta-D-glucosyl-N-(9Z-octadecenoyl)-sphing-4-enine) are preferred as glucose donors for cholesterol glucosylation when compared with GlcCer containing same chain length of saturated fatty acids (such as beta-D-glucosyl-N-octadecanoyl-sphing-4-enine). Under specific conditions, may alternatively catalyze the reverse reaction, transferring glucose from cholesteryl 3-beta-D-glucoside to ceramide. Can also hydrolyze cholesteryl 3-beta-D-glucoside producing glucose and cholesterol. Catalyzes the hydrolysis of galactosylceramides/GalCers (such as beta-D-galactosyl-(1&lt;-&gt;1')-N-acylsphing-4-enine), as well as the transfer of galactose between GalCers and cholesterol in vitro, but with lower activity than with GlcCers. Contrary to GlcCer and GalCer, xylosylceramide/XylCer (such as beta-D-xyosyl-(1&lt;-&gt;1')-N-acylsphing-4-enine) is not a good substrate for hydrolysis, however it is a good xylose donor for transxylosylation activity to form cholesteryl 3-beta-D-xyloside. The polypeptide is Lysosomal acid glucosylceramidase (GBA1) (Sus scrofa (Pig)).